The sequence spans 335 residues: Glucokinase (335 aa).

ATP is bound at residue 11-16; sequence ADIGGT.

Belongs to the bacterial glucokinase family.

Its subcellular location is the cytoplasm. It catalyses the reaction D-glucose + ATP = D-glucose 6-phosphate + ADP + H(+). This is Glucokinase from Xanthomonas campestris pv. campestris (strain 8004).